The primary structure comprises 347 residues: Eukaryotic translation initiation factor 3 subunit H (347 aa).

Residues V6 to T149 enclose the MPN domain. The interval S136–G155 is disordered. Residues T138 to G155 show a composition bias toward polar residues.

Belongs to the eIF-3 subunit H family. Component of the eukaryotic translation initiation factor 3 (eIF-3) complex.

The protein resides in the cytoplasm. Its function is as follows. Component of the eukaryotic translation initiation factor 3 (eIF-3) complex, which is involved in protein synthesis of a specialized repertoire of mRNAs and, together with other initiation factors, stimulates binding of mRNA and methionyl-tRNAi to the 40S ribosome. The eIF-3 complex specifically targets and initiates translation of a subset of mRNAs involved in cell proliferation. This chain is Eukaryotic translation initiation factor 3 subunit H, found in Yarrowia lipolytica (strain CLIB 122 / E 150) (Yeast).